The following is a 768-amino-acid chain: ATP-dependent RNA helicase DBP4 (768 aa).

The Q motif motif lies at 41-69 (VFFKDLPISNSTLKGLNDSAFLKLTDIQR). The 175-residue stretch at 72 to 246 (IPMSLKGYDI…RLSLTDYKTI (175 aa)) folds into the Helicase ATP-binding domain. ATP is bound at residue 85-92 (AKTGSGKT). The DEAD box signature appears at 194–197 (DEAD). The Helicase C-terminal domain maps to 280–439 (KLDMLYSFIK…SIKPQLQSLL (160 aa)). Disordered stretches follow at residues 581–612 (EEEL…KGNA) and 653–754 (KDVM…EPQT). Basic and acidic residues predominate over residues 653–666 (KDVMNEVDVEDKQV). Positions 667-678 (AKQKKQEKKRKR) are enriched in basic residues. The span at 711 to 721 (DMQDPDSDDEE) shows a compositional bias: acidic residues.

The protein belongs to the DEAD box helicase family. DDX10/DBP4 subfamily. As to quaternary structure, interacts with the U3 and U14 snoRNAs. Associates with pre-ribosomal complexes.

Its subcellular location is the nucleus. It is found in the nucleolus. The catalysed reaction is ATP + H2O = ADP + phosphate + H(+). In terms of biological role, ATP-dependent RNA helicase required for ribosome biogenesis. Involved in the release of U14 snoRNA in pre-ribosomal complexes. Required for pre-rRNA cleavage at site A2. This Vanderwaltozyma polyspora (strain ATCC 22028 / DSM 70294 / BCRC 21397 / CBS 2163 / NBRC 10782 / NRRL Y-8283 / UCD 57-17) (Kluyveromyces polysporus) protein is ATP-dependent RNA helicase DBP4 (DBP4).